A 127-amino-acid chain; its full sequence is Large ribosomal subunit protein uL18 (127 aa).

The protein belongs to the universal ribosomal protein uL18 family. As to quaternary structure, part of the 50S ribosomal subunit; part of the 5S rRNA/L5/L18/L25 subcomplex. Contacts the 5S and 23S rRNAs.

Its function is as follows. This is one of the proteins that bind and probably mediate the attachment of the 5S RNA into the large ribosomal subunit, where it forms part of the central protuberance. The protein is Large ribosomal subunit protein uL18 of Streptomyces avermitilis (strain ATCC 31267 / DSM 46492 / JCM 5070 / NBRC 14893 / NCIMB 12804 / NRRL 8165 / MA-4680).